The primary structure comprises 467 residues: Histone acetyltransferase type B catalytic subunit (467 aa).

Residues 1–24 are disordered; it reads MVQKQQASAGPGTEPKKRRRVGFS. Acetyl-CoA is bound by residues 249-251 and 256-262; these read ILV and QGKGLGS. Glu283 acts as the Proton donor/acceptor in catalysis.

This sequence belongs to the HAT1 family.

The protein resides in the nucleus. It localises to the cytoplasm. It carries out the reaction L-lysyl-[protein] + acetyl-CoA = N(6)-acetyl-L-lysyl-[protein] + CoA + H(+). Functionally, acetylates soluble but not nucleosomal H4. Acetylates 'Lys-12' of histone H4. The protein is Histone acetyltransferase type B catalytic subunit (HAG2) of Arabidopsis thaliana (Mouse-ear cress).